A 291-amino-acid chain; its full sequence is 33 kDa chaperonin (291 aa).

Cystine bridges form between Cys-235/Cys-237 and Cys-268/Cys-271.

It belongs to the HSP33 family. Under oxidizing conditions two disulfide bonds are formed involving the reactive cysteines. Under reducing conditions zinc is bound to the reactive cysteines and the protein is inactive.

Its subcellular location is the cytoplasm. Redox regulated molecular chaperone. Protects both thermally unfolding and oxidatively damaged proteins from irreversible aggregation. Plays an important role in the bacterial defense system toward oxidative stress. The sequence is that of 33 kDa chaperonin from Streptococcus agalactiae serotype III (strain NEM316).